Consider the following 329-residue polypeptide: tRNA dimethylallyltransferase (329 aa).

12–19 (GPTSVGKT) contributes to the ATP binding site. 14-19 (TSVGKT) is a binding site for substrate. Positions 37–40 (DSRY) are interaction with substrate tRNA. Residues 306 to 329 (LREESDEGDVAVHQSGGGKEAPRA) form a disordered region. Residues 320-329 (SGGGKEAPRA) show a composition bias toward gly residues.

It belongs to the IPP transferase family. In terms of assembly, monomer. It depends on Mg(2+) as a cofactor.

The catalysed reaction is adenosine(37) in tRNA + dimethylallyl diphosphate = N(6)-dimethylallyladenosine(37) in tRNA + diphosphate. Its function is as follows. Catalyzes the transfer of a dimethylallyl group onto the adenine at position 37 in tRNAs that read codons beginning with uridine, leading to the formation of N6-(dimethylallyl)adenosine (i(6)A). This Thermomicrobium roseum (strain ATCC 27502 / DSM 5159 / P-2) protein is tRNA dimethylallyltransferase.